A 311-amino-acid polypeptide reads, in one-letter code: D-alanine--D-alanine ligase (311 aa).

The ATP-grasp domain maps to 106-301 (KLLWRGAELP…FDELCWRILL (196 aa)). 132-187 (IGSVGLPLMIKPAHEGSSIGMAKVERPEELEAARAEAARYDDLVLAERWIEGGEYT) contributes to the ATP binding site. Mg(2+) contacts are provided by aspartate 255, glutamate 268, and asparagine 270.

Belongs to the D-alanine--D-alanine ligase family. The cofactor is Mg(2+). Mn(2+) serves as cofactor.

Its subcellular location is the cytoplasm. It carries out the reaction 2 D-alanine + ATP = D-alanyl-D-alanine + ADP + phosphate + H(+). It functions in the pathway cell wall biogenesis; peptidoglycan biosynthesis. Cell wall formation. The sequence is that of D-alanine--D-alanine ligase from Alkalilimnicola ehrlichii (strain ATCC BAA-1101 / DSM 17681 / MLHE-1).